The primary structure comprises 165 residues: Lipoprotein signal peptidase (165 aa).

3 helical membrane-spanning segments follow: residues 9-29 (SFLWLSAVTFLLDLSSKYFVV), 65-85 (WQKYFFIVLAIAISLMLCYFL), and 100-120 (ALIIGGALGNMIDRLYHGFVV). Residues D121 and D139 contribute to the active site. Residues 134–154 (VFNVADIAISLGAGLMILDAF) form a helical membrane-spanning segment.

Belongs to the peptidase A8 family.

It is found in the cell inner membrane. It catalyses the reaction Release of signal peptides from bacterial membrane prolipoproteins. Hydrolyzes -Xaa-Yaa-Zaa-|-(S,diacylglyceryl)Cys-, in which Xaa is hydrophobic (preferably Leu), and Yaa (Ala or Ser) and Zaa (Gly or Ala) have small, neutral side chains.. It participates in protein modification; lipoprotein biosynthesis (signal peptide cleavage). This protein specifically catalyzes the removal of signal peptides from prolipoproteins. This is Lipoprotein signal peptidase from Pasteurella multocida (strain Pm70).